The following is a 317-amino-acid chain: Taste receptor type 2 member 14 (317 aa).

Residues 1 to 7 (MGGVIKS) lie on the Extracellular side of the membrane. Residues 8 to 28 (IFTFVLIVEFIIGNLGNSFIA) traverse the membrane as a helical segment. Topologically, residues 29-55 (LVNCIDWVKGRKISSVDRILTALAISK) are cytoplasmic. A helical membrane pass occupies residues 56–76 (ISLVWLIFGSWCVSVFFPALF). At 77 to 87 (ATEKMFRMLTN) the chain is on the extracellular side. Thr86 and Trp89 together coordinate cholesterol. Residues 88-108 (IWTVINHFSVWLATGLGTFYF) form a helical membrane-spanning segment. The Cytoplasmic portion of the chain corresponds to 109–129 (LKIANFSNSIFLYLKWRVKKV). Residues 130–150 (VLVLLLVTSVFLFLNIALINI) traverse the membrane as a helical segment. Over 151-184 (HINASINGYRRNKTCSSDSSNFTRFSSLIVLTST) the chain is Extracellular. Asn153, Asn162, and Asn171 each carry an N-linked (GlcNAc...) asparagine glycan. A cholesterol-binding site is contributed by Val180. The chain crosses the membrane as a helical span at residues 185–205 (VFIFIPFTLSLAMFLLLIFSM). Over 206 to 232 (WKHRKKMQHTVKRSGDASTKAHRGVKS) the chain is Cytoplasmic. A helical membrane pass occupies residues 233 to 253 (MMTFFLLYAIFSLSFFISVWT). The Extracellular segment spans residues 254–261 (SERLEENL). A helical membrane pass occupies residues 262-282 (IILSQVMGMAYPSCHSCVLIL). Residues Ser265 and Met268 each contribute to the cholesterol site. Over 283–317 (GNKKLRQASLSVLLWLRYMFKDGEPSGHKEFRESS) the chain is Cytoplasmic.

This sequence belongs to the G-protein coupled receptor T2R family. Core component of the TAS2R14-GNAI1 complex, consisting of TAS2R14, GNAI1, GNB1 and GNG2; within the complex interacts with GNAI1. Core component of the TAS2R14-GNAT3 complex, consisting of TAS2R14, GNAT3, GNB1 and GNG2; within the complex interacts with GNAT3. Core component of the TAS2R14-GNAS2 complex, consisting of TAS2R14, GNAS2, GNB1 and GNG2; within the complex interacts with GNAS2.

The protein localises to the membrane. The catalysed reaction is Ca(2+)(in) = Ca(2+)(out). It carries out the reaction 3',5'-cyclic AMP(in) = 3',5'-cyclic AMP(out). Basal activity is enhanced by binding to bitter tastants, such as flufenamic acid and aristolochic acid. Regulated by cholesterol in a concentration-dependent manner. In terms of biological role, gustducin-linked G-protein coupled receptor that plays a role in the perception of bitterness. The activity of this receptor stimulates GNAT3, activating the gustducin G-protein pathway. Likely plays a role in sensing the chemical composition of the gastrointestinal content and other extra-oral tissues via the inhibitory G-protein pathways. In Pan paniscus (Pygmy chimpanzee), this protein is Taste receptor type 2 member 14 (TAS2R14).